The primary structure comprises 209 residues: Germin-like protein (209 aa).

A signal peptide spans 1–18; the sequence is MIVPIFFLFSLLFSSSHG. Residues Cys-24 and Cys-39 are joined by a disulfide bond. Residues 53-199 enclose the Cupin type-1 domain; that stretch reads SGLGITGNTT…ASFLDPAEIK (147 aa). Asn-60 carries N-linked (GlcNAc...) asparagine glycosylation. Residues His-101, His-103, Glu-108, and His-147 each coordinate Mn(2+).

It is found in the secreted. The protein localises to the extracellular space. The protein resides in the apoplast. Has antibacterial activity against B.subtilis (MIC=5 ug), B.cereus (MIC=50 ug), A.hydrophila (MIC=2.5 ug), S.marcescens(MIC=10 ug), S.enterica (MIC=10 ug), P.entomophila (MIC=2.5 ug) and P.rhodesiae (MIC=10 ug). Has antifungal activity against F.solani KACC 40384 and F.oxysporum KACC 40032. Probably has no oxalate oxidase activity even if the active site is conserved. In Morus alba (White mulberry), this protein is Germin-like protein.